Here is a 764-residue protein sequence, read N- to C-terminus: Tyrosine-protein phosphatase corkscrew (764 aa).

An SH2 domain is found at W1–F95. A Tyrosine-protein phosphatase domain is found at F117–Y522. The segment at I174–T325 is PTPase insert (Cys/Ser-rich). The segment at S246 to A273 is disordered. Over residues S255–A273 the composition is skewed to low complexity. Residues D422, C460 to R466, and Q507 contribute to the substrate site. C460 (phosphocysteine intermediate) is an active-site residue. The tract at residues A599–G666 is disordered. The span at S612–G666 shows a compositional bias: low complexity.

It belongs to the protein-tyrosine phosphatase family. Non-receptor class subfamily.

It is found in the cytoplasm. It catalyses the reaction O-phospho-L-tyrosyl-[protein] + H2O = L-tyrosyl-[protein] + phosphate. Required in all receptor tyrosine kinase signaling pathways. Functions downstream of the receptor tyrosine kinase torso, acting in concert with D-Raf via tailless. Also functions downstream of Egfr (epidermal growth factor receptor) and btl (fibroblast growth factor receptor). The SH2 domain suggests that csw effects its role by mediating heteromeric protein interactions. Maternally required for normal determination of cell fates at the termini of the embryo. Required for cell fate specification of the ventral ectoderm, in the developing embryonic CNS and for embryonic tracheal cell migration. Functions during imaginal development for proper formation of adult structures such as eyes, aristae, L5 wing vein and the tarsal claw. The protein is Tyrosine-protein phosphatase corkscrew (csw) of Drosophila virilis (Fruit fly).